Here is a 400-residue protein sequence, read N- to C-terminus: Tryptophan synthase beta chain (400 aa).

N6-(pyridoxal phosphate)lysine is present on Lys91.

The protein belongs to the TrpB family. As to quaternary structure, tetramer of two alpha and two beta chains. Pyridoxal 5'-phosphate serves as cofactor.

It catalyses the reaction (1S,2R)-1-C-(indol-3-yl)glycerol 3-phosphate + L-serine = D-glyceraldehyde 3-phosphate + L-tryptophan + H2O. Its pathway is amino-acid biosynthesis; L-tryptophan biosynthesis; L-tryptophan from chorismate: step 5/5. Its function is as follows. The beta subunit is responsible for the synthesis of L-tryptophan from indole and L-serine. In Listeria monocytogenes serotype 4a (strain HCC23), this protein is Tryptophan synthase beta chain.